We begin with the raw amino-acid sequence, 379 residues long: Queuine tRNA-ribosyltransferase (379 aa).

D94 acts as the Proton acceptor in catalysis. Residues 94–98, D148, Q191, and G218 each bind substrate; that span reads DSGGF. The RNA binding stretch occupies residues 249–255; the sequence is GVGSPDA. D268 serves as the catalytic Nucleophile. An RNA binding; important for wobble base 34 recognition region spans residues 273–277; the sequence is TRIAR. Zn(2+) is bound by residues C306, C308, C311, and H337.

It belongs to the queuine tRNA-ribosyltransferase family. As to quaternary structure, homodimer. Within each dimer, one monomer is responsible for RNA recognition and catalysis, while the other monomer binds to the replacement base PreQ1. Requires Zn(2+) as cofactor.

It catalyses the reaction 7-aminomethyl-7-carbaguanine + guanosine(34) in tRNA = 7-aminomethyl-7-carbaguanosine(34) in tRNA + guanine. It participates in tRNA modification; tRNA-queuosine biosynthesis. Functionally, catalyzes the base-exchange of a guanine (G) residue with the queuine precursor 7-aminomethyl-7-deazaguanine (PreQ1) at position 34 (anticodon wobble position) in tRNAs with GU(N) anticodons (tRNA-Asp, -Asn, -His and -Tyr). Catalysis occurs through a double-displacement mechanism. The nucleophile active site attacks the C1' of nucleotide 34 to detach the guanine base from the RNA, forming a covalent enzyme-RNA intermediate. The proton acceptor active site deprotonates the incoming PreQ1, allowing a nucleophilic attack on the C1' of the ribose to form the product. After dissociation, two additional enzymatic reactions on the tRNA convert PreQ1 to queuine (Q), resulting in the hypermodified nucleoside queuosine (7-(((4,5-cis-dihydroxy-2-cyclopenten-1-yl)amino)methyl)-7-deazaguanosine). The chain is Queuine tRNA-ribosyltransferase from Macrococcus caseolyticus (strain JCSC5402) (Macrococcoides caseolyticum).